The sequence spans 78 residues: Antitoxin VapB2 (78 aa).

Positions 4–44 constitute a SpoVT-AbrB domain; that stretch reads AKIFMNGQSQAVRLPKEFRFSVKEVSVIPLGKGIVLQPLPN.

Belongs to the VapB family. In terms of assembly, forms complexes with VapC2; probably VapC2(4):VapB2(2) in the absence of DNA, and VapC2(4):VapB2(4) in the presence of DNA. Crystallizes as heterodimers with stoichiometry VapC2(4):VapB2(4) in the presence of its probable promoter DNA. The heterodimers are in contact via alternative VapC-VapC and VapB-VapB interactions. This subunit contacts DNA.

Functionally, antitoxin component of a type II toxin-antitoxin (TA) system. Upon expression in E.coli or S.cerevisiae neutralizes the effect of cognate toxin VapC2, partially inhibits the RNase activity of VapC2. The chain is Antitoxin VapB2 (vapB2) from Rickettsia felis (strain ATCC VR-1525 / URRWXCal2) (Rickettsia azadi).